Here is a 284-residue protein sequence, read N- to C-terminus: Ribosome-associated protein oga1 (284 aa).

The disordered stretch occupies residues 1-284 (MSVASKNLFD…LSETDFPALA (284 aa)). Residues 22–36 (TEKKTAASRDKKRSD) show a composition bias toward basic and acidic residues. Phosphoserine occurs at positions 37 and 51. Basic and acidic residues-rich tracts occupy residues 52-73 (RKRD…ADQP) and 119-141 (GREF…ERGW). Threonine 160 bears the Phosphothreonine mark. Phosphoserine is present on serine 162. At threonine 166 the chain carries Phosphothreonine. 2 stretches are compositionally biased toward basic and acidic residues: residues 172 to 186 (ENVK…ERKS) and 194 to 209 (TVEK…KSAP). The segment covering 214–224 (ASLKKSASQKK) has biased composition (low complexity). Residues 226–237 (AAKESKPKKVLL) are compositionally biased toward basic and acidic residues. Residues 245–254 (ARPARGGRPN) show a composition bias toward low complexity. Polar residues predominate over residues 263–277 (ETASKTQQAPPTLSE).

This sequence belongs to the STM1 family. In terms of assembly, associates with mature 80S ribosomes. Binds to the head domain of the 40S ribosomal subunit and prevents mRNA binding by inserting its alpha-helix domain towards the mRNA entry tunnel at the decoding site, where it blocks the binding of tRNA and mRNA at the A- and P-sites. Interacts with eEF2; interaction sequesters eEF2 at the A-site of the ribosome, thereby blocking the interaction sites of the mRNA-tRNA complex, promoting ribosome stabilization and hibernation. Interacts with sad1. Phosphorylation by TORC1 upon nutrient replenishment inhibits STM1 and causes its release from dormant ribosomes.

Its subcellular location is the cytoplasm. Its function is as follows. Ribosome preservation factor that protect a small pool of nontranslating, vacant ribosomes in cells under nutrient starvation conditions. Under nutrient-limiting conditions, cells reduce ribosome biogenesis and degrade ribosomes via autophagy (ribophagy) or proteasomal degradation. To avoid excessive degradation during starvation, STM1 binds to and protects 80S ribosomes from proteasomal degradation. Under nutrient-sufficient conditions, TORC1 phosphorylates and inhibits STM1 to prevent formation of dormant 80S ribosomes. Acts as an inhibitor of mRNA translation by promoting ribosome hibernation: clamps the two ribosomal subunits, thereby preventing their dissociation, and inhibits translation by excluding mRNA-binding. Acts via its association with eEF2, promoting ribosome stabilization and storage in an inactive state. May also repress translation by preventing association of eEF3 with ribosomes. Binds specifically G4 quadruplex (these are four-stranded right-handed helices, stabilized by guanine base quartets) and purine motif triplex (characterized by a third, antiparallel purine-rich DNA strand located within the major groove of a homopurine stretch of duplex DNA) nucleic acid structures. These structures may be present at telomeres or in rRNAs. Extends chronological lifespan when overexpressed. This is Ribosome-associated protein oga1 from Schizosaccharomyces pombe (strain 972 / ATCC 24843) (Fission yeast).